A 654-amino-acid chain; its full sequence is Macrolide export ATP-binding/permease protein MacB (654 aa).

Residues 6–244 (IEISALNRIF…TSASSATDAA (239 aa)) form the ABC transporter domain. 42-49 (GTSGSGKS) is an ATP binding site. 4 helical membrane-spanning segments follow: residues 279 to 299 (LLTMLGIIIGITAVVSIVAIG), 534 to 554 (IAVISLIVGGIGVMNIMLVSV), 584 to 604 (MVCLIGGGIGILLSFGVGALF), and 617 to 637 (VTAIVSAVVCSSLIGVLFGFL).

It belongs to the ABC transporter superfamily. Macrolide exporter (TC 3.A.1.122) family. In terms of assembly, homodimer. Part of the tripartite efflux system MacAB-TolC, which is composed of an inner membrane transporter, MacB, a periplasmic membrane fusion protein, MacA, and an outer membrane component, TolC. The complex forms a large protein conduit and can translocate molecules across both the inner and outer membranes. Interacts with MacA.

Its subcellular location is the cell inner membrane. Part of the tripartite efflux system MacAB-TolC. MacB is a non-canonical ABC transporter that contains transmembrane domains (TMD), which form a pore in the inner membrane, and an ATP-binding domain (NBD), which is responsible for energy generation. Confers resistance against macrolides. The polypeptide is Macrolide export ATP-binding/permease protein MacB (Hahella chejuensis (strain KCTC 2396)).